A 533-amino-acid chain; its full sequence is Probable protein kinase UbiB (533 aa).

The helical transmembrane segment at 24-44 (LILELPMLPWWLRLLGATLPW) threads the bilayer. The Protein kinase domain maps to 126–494 (RFEREPLASA…WKGSRHDWLG (369 aa)). Residues 132 to 140 (LASASVAQV) and lysine 154 each bind ATP. Catalysis depends on aspartate 289, which acts as the Proton acceptor. The chain crosses the membrane as a helical span at residues 510–530 (LGQQLEAWPAWVMLAGGVFLI).

It belongs to the ABC1 family. UbiB subfamily.

The protein resides in the cell inner membrane. It participates in cofactor biosynthesis; ubiquinone biosynthesis [regulation]. Functionally, is probably a protein kinase regulator of UbiI activity which is involved in aerobic coenzyme Q (ubiquinone) biosynthesis. The protein is Probable protein kinase UbiB of Pseudomonas aeruginosa (strain LESB58).